The following is a 257-amino-acid chain: 5'-nucleotidase SurE (257 aa).

Residues Asp-8, Asp-9, Ser-39, and Asn-87 each contribute to the a divalent metal cation site. Residues 234–257 form a disordered region; the sequence is VSPLTAPHPTTGHEGLAGLAEKYQ.

The protein belongs to the SurE nucleotidase family. Requires a divalent metal cation as cofactor.

The protein resides in the cytoplasm. The catalysed reaction is a ribonucleoside 5'-phosphate + H2O = a ribonucleoside + phosphate. In terms of biological role, nucleotidase that shows phosphatase activity on nucleoside 5'-monophosphates. The sequence is that of 5'-nucleotidase SurE from Natronomonas pharaonis (strain ATCC 35678 / DSM 2160 / CIP 103997 / JCM 8858 / NBRC 14720 / NCIMB 2260 / Gabara) (Halobacterium pharaonis).